Reading from the N-terminus, the 105-residue chain is Large ribosomal subunit protein uL24 (105 aa).

This sequence belongs to the universal ribosomal protein uL24 family. In terms of assembly, part of the 50S ribosomal subunit.

Functionally, one of two assembly initiator proteins, it binds directly to the 5'-end of the 23S rRNA, where it nucleates assembly of the 50S subunit. One of the proteins that surrounds the polypeptide exit tunnel on the outside of the subunit. The protein is Large ribosomal subunit protein uL24 of Staphylococcus epidermidis (strain ATCC 35984 / DSM 28319 / BCRC 17069 / CCUG 31568 / BM 3577 / RP62A).